The primary structure comprises 1277 residues: Membrane-associated guanylate kinase, WW and PDZ domain-containing protein 2 (1277 aa).

Positions 17–101 (ESVIGRNPEG…PLRLKCVKQG (85 aa)) constitute a PDZ domain. Positions 109 to 283 (RHYLNLRFQK…APVYSQPEEL (175 aa)) constitute a Guanylate kinase-like domain. Residues 205–308 (PGATPSAEGK…EDSDPLPDNW (104 aa)) form a disordered region. The segment covering 281 to 296 (EELKDQMDDTKSTKPE) has biased composition (basic and acidic residues). WW domains lie at 302-335 (DPLP…DPRL) and 348-381 (NELP…NPVL). Residues 302–381 (DPLPDNWEMA…RRTQFENPVL (80 aa)) form an interaction with DDN region. Y362 is modified (phosphotyrosine). The PDZ 1 domain maps to 426 to 510 (STTLKKSNMG…SVNLVLCRGY (85 aa)). The disordered stretch occupies residues 556–575 (QSVPDITDRPPHSLHSMPAD). Residues 605 to 683 (TLTIVKGAKG…ETSLIIHRGG (79 aa)) enclose the PDZ 2 domain. The residue at position 686 (S686) is a Phosphoserine. The PDZ 3 domain occupies 778–860 (DVHLRRMESG…NGQVNLTVRR (83 aa)). Phosphotyrosine is present on Y827. Residues 869-913 (CPENGRSPGSVSTHHSSPRSDYATYANSNHAAPSNNASPPEGFAS) are disordered. Phosphoserine is present on residues S884 and S885. Positions 894–908 (ANSNHAAPSNNASPP) are enriched in low complexity. Positions 920-1010 (DVIIHRKENE…SVTLRIIPQE (91 aa)) constitute a PDZ 4 domain. The span at 1011–1042 (ELNNPTSAPSSEKQSPMAQQHSPLAQQHSPLA) shows a compositional bias: polar residues. Positions 1011 to 1130 (ELNNPTSAPS…PDTRQYPLSD (120 aa)) are disordered. Over residues 1069 to 1085 (NSYRSEVKARQDVKPDI) the composition is skewed to basic and acidic residues. The region spanning 1141-1223 (TVDMEKGAKG…RVRLLLKRGT (83 aa)) is the PDZ 5 domain.

Belongs to the MAGUK family. Interacts (via its WW domains) with DRPLA. Interacts with CTNNB1, ACVR2A, SMAD2 and SMAD3. Part of a complex consisting of MAGI2/ARIP1, ACVR2A, ACVR1B and SMAD3. May interact with HTR2A and IGSF9. Interacts with HTR4. Interacts (via guanylate kinase domain) with DLGAP1. Interacts (via PDZ domains) with GRIN2A, GRID2 and NLGN1. Interacts with CTNND2. Interacts with MAGUIN-1. Interacts (via its second PDZ domain) with PTEN (via unphosphorylated C-terminus); this interaction diminishes the degradation rate of PTEN. Found in a complex, at least composed of KIDINS220, MAGI2, NTRK1 and RAPGEF2; the complex is mainly formed at late endosomes in a NGF-dependent manner. Interacts with RAPGEF2; the interaction occurs before or after nerve growth factor (NGF) stimulation. Isoform 1 interacts (via PDZ domain) with KIDINS220 isoform 2 (via C-terminal domain). Interacts with DDN. Identified in a complex with ACTN4, CASK, IQGAP1, NPHS1, SPTAN1 and SPTBN1. Interacts with DLL1. Found in a complex with IGSF9B and NLGN2; the interaction with IGSF9B is mediated via the PDZ 5 and PDZ 6 domains, while the interaction with NLGN2 is mediated via the WW1, WW2 and PDZ2 domains. Interacts (via PDZ 6 domain) with USH1G (via SAM domain); the interaction is triggered by phosphorylation of USH1G by CK2 and negatively regulates MAGI2-mediated endocytosis. As to expression, expressed in the foot process layer of podocytes of the kidney glomeruli but not in tubules (at protein level). Expressed in the brain.

It is found in the cytoplasm. The protein resides in the late endosome. It localises to the synapse. The protein localises to the synaptosome. Its subcellular location is the cell membrane. It is found in the cytoskeleton. The protein resides in the microtubule organizing center. It localises to the centrosome. The protein localises to the cell projection. Its subcellular location is the cilium. It is found in the centriole. The protein resides in the photoreceptor inner segment. It localises to the photoreceptor outer segment. Seems to act as scaffold molecule at synaptic junctions by assembling neurotransmitter receptors and cell adhesion proteins. Plays a role in nerve growth factor (NGF)-induced recruitment of RAPGEF2 to late endosomes and neurite outgrowth. May play a role in regulating activin-mediated signaling in neuronal cells. Enhances the ability of PTEN to suppress AKT1 activation. Plays a role in receptor-mediated clathrin-dependent endocytosis which is required for ciliogenesis. The chain is Membrane-associated guanylate kinase, WW and PDZ domain-containing protein 2 (Magi2) from Rattus norvegicus (Rat).